The chain runs to 234 residues: Triosephosphate isomerase (234 aa).

Asn8–Lys10 is a binding site for substrate. Catalysis depends on His90, which acts as the Electrophile. Catalysis depends on Glu159, which acts as the Proton acceptor. Substrate is bound by residues Gly165 and Ser197.

It belongs to the triosephosphate isomerase family. As to quaternary structure, homodimer.

It localises to the cytoplasm. It catalyses the reaction D-glyceraldehyde 3-phosphate = dihydroxyacetone phosphate. The protein operates within carbohydrate biosynthesis; gluconeogenesis. It functions in the pathway carbohydrate degradation; glycolysis; D-glyceraldehyde 3-phosphate from glycerone phosphate: step 1/1. Its function is as follows. Involved in the gluconeogenesis. Catalyzes stereospecifically the conversion of dihydroxyacetone phosphate (DHAP) to D-glyceraldehyde-3-phosphate (G3P). The chain is Triosephosphate isomerase from Helicobacter pylori (strain P12).